We begin with the raw amino-acid sequence, 283 residues long: DegV domain-containing protein lmo2514 (283 aa).

One can recognise a DegV domain in the interval 5–282; that stretch reads IAVVTDSTTY…EGALGLTWSI (278 aa). The hexadecanoate site is built by Ser-63 and Ser-96.

In terms of biological role, may bind long-chain fatty acids, such as palmitate, and may play a role in lipid transport or fatty acid metabolism. The protein is DegV domain-containing protein lmo2514 of Listeria monocytogenes serovar 1/2a (strain ATCC BAA-679 / EGD-e).